The primary structure comprises 208 residues: Translation initiation factor 6 (208 aa).

This sequence belongs to the eIF-6 family.

Its function is as follows. Binds to the 50S ribosomal subunit and prevents its association with the 30S ribosomal subunit to form the 70S initiation complex. The protein is Translation initiation factor 6 (eif6) of Nanoarchaeum equitans (strain Kin4-M).